The sequence spans 103 residues: Putative membrane protein insertion efficiency factor (103 aa).

This sequence belongs to the UPF0161 family.

The protein localises to the cell inner membrane. Its function is as follows. Could be involved in insertion of integral membrane proteins into the membrane. The chain is Putative membrane protein insertion efficiency factor from Chlamydia felis (strain Fe/C-56) (Chlamydophila felis).